Reading from the N-terminus, the 382-residue chain is D-galactonate dehydratase (382 aa).

Aspartate 183 contacts Mg(2+). The active-site Proton donor is histidine 185. Mg(2+)-binding residues include glutamate 209 and glutamate 235. Histidine 285 acts as the Proton acceptor in catalysis.

This sequence belongs to the mandelate racemase/muconate lactonizing enzyme family. GalD subfamily. Mg(2+) is required as a cofactor.

It carries out the reaction D-galactonate = 2-dehydro-3-deoxy-D-galactonate + H2O. It functions in the pathway carbohydrate acid metabolism; D-galactonate degradation; D-glyceraldehyde 3-phosphate and pyruvate from D-galactonate: step 1/3. Catalyzes the dehydration of D-galactonate to 2-keto-3-deoxy-D-galactonate. The chain is D-galactonate dehydratase from Escherichia coli (strain UTI89 / UPEC).